The following is a 185-amino-acid chain: DNA-directed RNA polymerase 21 kDa subunit (185 aa).

Belongs to the poxviridae DNA-directed RNA polymerase 22 kDa subunit family. As to quaternary structure, the DNA-dependent RNA polymerase used for intermediate and late genes expression consists of eight subunits Rpo30/OPG66, Rpo7/OPG90, Rpo22/OPG103, Rpo147/OPG105, Rpo18/OPG119, Rpo19/OPG131, Rpo132/OPG151 and Rpo35/OPG156. The same holoenzyme, with the addition of the transcription-specificity factor OPG109, is used for early gene expression.

Its subcellular location is the virion. The catalysed reaction is RNA(n) + a ribonucleoside 5'-triphosphate = RNA(n+1) + diphosphate. Its function is as follows. Part of the DNA-dependent RNA polymerase which catalyzes the transcription of viral DNA into RNA using the four ribonucleoside triphosphates as substrates. Responsible for the transcription of early, intermediate and late genes. DNA-dependent RNA polymerase associates with the early transcription factor (ETF), itself composed of OPG118 and OPG133, thereby allowing the early genes transcription. Late transcription, and probably also intermediate transcription, require newly synthesized RNA polymerase. The polypeptide is DNA-directed RNA polymerase 21 kDa subunit (OPG103) (Oryctolagus cuniculus (Rabbit)).